Consider the following 337-residue polypeptide: ATP-dependent 6-phosphofructokinase (337 aa).

G11 is an ATP binding site. An ADP-binding site is contributed by 21-25 (RAVVR). ATP is bound by residues 72–73 (RY) and 102–105 (GDGS). D103 contacts Mg(2+). 125-127 (TID) is a substrate binding site. The active-site Proton acceptor is D127. Residue R154 coordinates ADP. Substrate-binding positions include R162 and 169-171 (MGR). ADP is bound by residues 185-187 (GAD), R212, and 214-216 (KNH). Substrate is bound by residues E223, R245, and 251–254 (HILR).

This sequence belongs to the phosphofructokinase type A (PFKA) family. ATP-dependent PFK group I subfamily. Prokaryotic clade 'B1' sub-subfamily. In terms of assembly, homotetramer. Mg(2+) is required as a cofactor.

Its subcellular location is the cytoplasm. It catalyses the reaction beta-D-fructose 6-phosphate + ATP = beta-D-fructose 1,6-bisphosphate + ADP + H(+). The protein operates within carbohydrate degradation; glycolysis; D-glyceraldehyde 3-phosphate and glycerone phosphate from D-glucose: step 3/4. Allosterically activated by ADP and other diphosphonucleosides, and allosterically inhibited by phosphoenolpyruvate. Catalyzes the phosphorylation of D-fructose 6-phosphate to fructose 1,6-bisphosphate by ATP, the first committing step of glycolysis. In Streptococcus equi subsp. zooepidemicus (strain H70), this protein is ATP-dependent 6-phosphofructokinase.